Consider the following 636-residue polypeptide: Molybdenum cofactor biosynthesis protein 1 (636 aa).

The segment at Met1–Ile383 is molybdenum cofactor biosynthesis protein A. Residue Ser64 is modified to Phosphoserine. Residues Ser64–Glu277 enclose the Radical SAM core domain. Arg73 contributes to the GTP binding site. Residues Cys80 and Cys84 each coordinate [4Fe-4S] cluster. An S-adenosyl-L-methionine-binding site is contributed by Tyr86. Residue Cys87 coordinates [4Fe-4S] cluster. Arg123 contributes to the GTP binding site. Position 127 (Gly127) interacts with S-adenosyl-L-methionine. Thr154 is a binding site for GTP. Position 178 (Ser178) interacts with S-adenosyl-L-methionine. Lys198 carries the post-translational modification N6-acetyllysine. Lys215 contributes to the GTP binding site. Met249 serves as a coordination point for S-adenosyl-L-methionine. [4Fe-4S] cluster contacts are provided by Cys312 and Cys315. Arg317–Arg319 contacts GTP. Cys329 contributes to the [4Fe-4S] cluster binding site. The interval Met414 to Ala636 is molybdenum cofactor biosynthesis protein C. The tract at residues Asp456 to Glu480 is disordered. A compositionally biased stretch (low complexity) spans Ser463 to Pro475. Lys528 bears the N6-acetyllysine mark. The active-site For molybdenum cofactor biosynthesis protein C activity is Asp606.

This sequence in the C-terminal section; belongs to the MoaC family. The protein in the N-terminal section; belongs to the radical SAM superfamily. MoaA family. As to quaternary structure, isoform MOCS1A and isoform MOCS1B probably form a heterooligomer. It depends on [4Fe-4S] cluster as a cofactor. In terms of tissue distribution, isoform MOCS1A and isoform 2 are widely expressed.

It catalyses the reaction GTP + AH2 + S-adenosyl-L-methionine = (8S)-3',8-cyclo-7,8-dihydroguanosine 5'-triphosphate + 5'-deoxyadenosine + L-methionine + A + H(+). The enzyme catalyses (8S)-3',8-cyclo-7,8-dihydroguanosine 5'-triphosphate = cyclic pyranopterin phosphate + diphosphate. The protein operates within cofactor biosynthesis; molybdopterin biosynthesis. Its function is as follows. Isoform MOCS1A and isoform MOCS1B probably form a complex that catalyzes the conversion of 5'-GTP to cyclic pyranopterin monophosphate (cPMP). MOCS1A catalyzes the cyclization of GTP to (8S)-3',8-cyclo-7,8-dihydroguanosine 5'-triphosphate and MOCS1B catalyzes the subsequent conversion of (8S)-3',8-cyclo-7,8-dihydroguanosine 5'-triphosphate to cPMP. The chain is Molybdenum cofactor biosynthesis protein 1 (MOCS1) from Homo sapiens (Human).